The sequence spans 124 residues: Fluoride-specific ion channel FluC (124 aa).

4 helical membrane passes run 1–21 (MIALIAAVSAGGIAGTLLRFA), 37–57 (GTLAVNLVGCLLIGLLYGLFL), 69–89 (GLIVGFLGGLTTFSSFSLDTV), and 99–119 (LALGYTSISVVGGLLATWAGL). Residues G76 and T79 each contribute to the Na(+) site.

The protein belongs to the fluoride channel Fluc/FEX (TC 1.A.43) family.

It localises to the cell inner membrane. It catalyses the reaction fluoride(in) = fluoride(out). With respect to regulation, na(+) is not transported, but it plays an essential structural role and its presence is essential for fluoride channel function. Fluoride-specific ion channel. Important for reducing fluoride concentration in the cell, thus reducing its toxicity. This Pseudomonas putida (strain ATCC 700007 / DSM 6899 / JCM 31910 / BCRC 17059 / LMG 24140 / F1) protein is Fluoride-specific ion channel FluC.